Here is a 294-residue protein sequence, read N- to C-terminus: uncharacterized protein (294 aa).

The signal sequence occupies residues 1–18 (MKKLLLIITVFFTCSAVA).

This is an uncharacterized protein from Rickettsia bellii (strain RML369-C).